Reading from the N-terminus, the 91-residue chain is Cell division topological specificity factor (91 aa).

Belongs to the MinE family.

Functionally, prevents the cell division inhibition by proteins MinC and MinD at internal division sites while permitting inhibition at polar sites. This ensures cell division at the proper site by restricting the formation of a division septum at the midpoint of the long axis of the cell. The polypeptide is Cell division topological specificity factor (Erwinia tasmaniensis (strain DSM 17950 / CFBP 7177 / CIP 109463 / NCPPB 4357 / Et1/99)).